The chain runs to 129 residues: Small ribosomal subunit protein uS11 (129 aa).

It belongs to the universal ribosomal protein uS11 family. As to quaternary structure, part of the 30S ribosomal subunit.

In terms of biological role, located on the platform of the 30S subunit. This is Small ribosomal subunit protein uS11 from Haloarcula marismortui (strain ATCC 43049 / DSM 3752 / JCM 8966 / VKM B-1809) (Halobacterium marismortui).